The sequence spans 889 residues: Coatomer subunit gamma-2 (889 aa).

5 HEAT repeats span residues 67–102 (VEAT…SPSA), 103–140 (DEVI…STLL), 289–326 (RELT…THPL), 328–360 (VTNC…TGNE), and 361–398 (SSVD…KFPL). The disordered stretch occupies residues 596-617 (PLAEKKTTGKKPTGPASALSGP).

This sequence belongs to the COPG family. Oligomeric complex that consists of at least the alpha, beta, beta', gamma, delta, epsilon and zeta subunits.

The protein resides in the cytoplasm. The protein localises to the golgi apparatus membrane. Its subcellular location is the cytoplasmic vesicle. It localises to the COPI-coated vesicle membrane. Functionally, the coatomer is a cytosolic protein complex that binds to dilysine motifs and reversibly associates with Golgi non-clathrin-coated vesicles, which further mediate biosynthetic protein transport from the ER, via the Golgi up to the trans Golgi network. Coatomer complex is required for budding from Golgi membranes, and is essential for the retrograde Golgi-to-ER transport of dilysine-tagged proteins. The protein is Coatomer subunit gamma-2 of Oryza sativa subsp. japonica (Rice).